Here is a 257-residue protein sequence, read N- to C-terminus: Zinc import ATP-binding protein ZnuC (257 aa).

The 216-residue stretch at 5 to 220 (VELQSVTVTF…PSYVALFGQQ (216 aa)) folds into the ABC transporter domain. 37 to 44 (GPNGAGKS) serves as a coordination point for ATP. Residues 234 to 257 (HEHDLAGSPVGPCQHNKQHGHDNA) form a disordered region.

This sequence belongs to the ABC transporter superfamily. Zinc importer (TC 3.A.1.15.5) family. The complex is composed of two ATP-binding proteins (ZnuC), two transmembrane proteins (ZnuB) and a solute-binding protein (ZnuA).

It is found in the cell inner membrane. The enzyme catalyses Zn(2+)(out) + ATP(in) + H2O(in) = Zn(2+)(in) + ADP(in) + phosphate(in) + H(+)(in). Its function is as follows. Part of the ABC transporter complex ZnuABC involved in zinc import. Responsible for energy coupling to the transport system. The chain is Zinc import ATP-binding protein ZnuC from Photobacterium profundum (strain SS9).